Here is a 725-residue protein sequence, read N- to C-terminus: Glutamine-dependent NAD(+) synthetase (725 aa).

The 271-residue stretch at 5–275 (VTVATCALNQ…VEVLTATLDL (271 aa)) folds into the CN hydrolase domain. Residue E45 is the Proton acceptor; for glutaminase activity of the active site. K114 acts as the For glutaminase activity in catalysis. Residue C175 is the Nucleophile; for glutaminase activity of the active site. A ligase region spans residues 325-706 (YHRPEEEISL…KASQTREEQV (382 aa)). ATP is bound at residue 355 to 362 (PLSGGVDS). The active site involves S357.

It in the C-terminal section; belongs to the NAD synthetase family. In terms of assembly, homohexamer. In terms of tissue distribution, highly expressed in small intestine, kidney, liver and testis. Weakly expressed in skeletal muscle, spleen, lung, heart and brain.

The catalysed reaction is deamido-NAD(+) + L-glutamine + ATP + H2O = L-glutamate + AMP + diphosphate + NAD(+) + H(+). The protein operates within cofactor biosynthesis; NAD(+) biosynthesis; NAD(+) from deamido-NAD(+) (L-Gln route): step 1/1. In terms of biological role, catalyzes the final step of the nicotinamide adenine dinucleotide (NAD) de novo synthesis pathway, the ATP-dependent amidation of deamido-NAD using L-glutamine as a nitrogen source. The sequence is that of Glutamine-dependent NAD(+) synthetase (Nadsyn1) from Mus musculus (Mouse).